A 369-amino-acid chain; its full sequence is IST1-like protein (369 aa).

The stretch at 12–59 forms a coiled coil; that stretch reads KLKVQLKLAVSRIQILKNKKANIVRDEKRNVAELLRKKNEESARIRVE. Positions 224-354 are disordered; that stretch reads QIIQQQQQPQ…SSDTGYPDYD (131 aa). Low complexity-rich tracts occupy residues 225-239 and 246-270; these read IIQQQQQPQMPSFPI and PTFSQIQHQQQIQQQYQQQQQSPQF. Residues 277–305 are compositionally biased toward polar residues; it reads FYNNNSGNQTPQFPTISTNNSDGYSNDKF. Positions 306–337 are enriched in low complexity; that stretch reads NNGNNNYNNNNNNNNNNNNNNNHNNNNNNNNN.

It belongs to the IST1 family.

The polypeptide is IST1-like protein (Dictyostelium discoideum (Social amoeba)).